The chain runs to 635 residues: Chaperone protein HtpG (635 aa).

The interval Met-1–Arg-346 is a; substrate-binding. The tract at residues Glu-347–Arg-563 is b. Positions Met-564–Ala-635 are c.

It belongs to the heat shock protein 90 family. As to quaternary structure, homodimer.

The protein localises to the cytoplasm. Functionally, molecular chaperone. Has ATPase activity. In Bordetella parapertussis (strain 12822 / ATCC BAA-587 / NCTC 13253), this protein is Chaperone protein HtpG.